Here is a 389-residue protein sequence, read N- to C-terminus: Chalcone synthase (389 aa).

Active-site residues include C164, H303, and N336.

The protein belongs to the thiolase-like superfamily. Chalcone/stilbene synthases family. As to quaternary structure, homodimer. Mainly expressed in flowers, to a lower extent in young leaves, and barely in mature leaves and twigs.

The enzyme catalyses (E)-4-coumaroyl-CoA + 3 malonyl-CoA + 3 H(+) = 2',4,4',6'-tetrahydroxychalcone + 3 CO2 + 4 CoA. The protein operates within secondary metabolite biosynthesis; flavonoid biosynthesis. Functionally, the primary product of this enzyme is 4,2',4',6'-tetrahydroxychalcone (also termed naringenin-chalcone or chalcone) which can under specific conditions spontaneously isomerize into naringenin. This chain is Chalcone synthase, found in Rhododendron dauricum (Azalea daurica).